The following is a 1051-amino-acid chain: SWI/SNF-related matrix-associated actin-dependent regulator of chromatin subfamily A member 5 (1051 aa).

Positions M1–S15 are enriched in pro residues. Residues M1 to E81 form a disordered region. S2 carries the N-acetylserine modification. Gly residues predominate over residues G24–G38. Positions G39–A53 are enriched in low complexity. At T55 the chain carries Phosphothreonine. At S65 the chain carries Phosphoserine. Basic and acidic residues predominate over residues K68–E81. A Glycyl lysine isopeptide (Lys-Gly) (interchain with G-Cter in SUMO2) cross-link involves residue K82. T112 carries the post-translational modification Phosphothreonine. 3 positions are modified to phosphoserine: S115, S136, and S170. In terms of domain architecture, Helicase ATP-binding spans I191 to D356. Residue D204 to T211 coordinates ATP. The DEAH box motif lies at D307–H310. K439 bears the N6-acetyllysine mark. The Helicase C-terminal domain occupies V486 to V637. Glycyl lysine isopeptide (Lys-Gly) (interchain with G-Cter in SUMO2) cross-links involve residues K643, K646, K693, K721, and K734. S754 carries the phosphoserine modification. 2 SANT domains span residues Q839–N891 and K942–L1006. A Glycyl lysine isopeptide (Lys-Gly) (interchain with G-Cter in SUMO2) cross-link involves residue K965. The interval L1014 to L1051 is disordered. A compositionally biased stretch (basic residues) spans K1022–K1033. A compositionally biased stretch (basic and acidic residues) spans R1034 to R1043.

It belongs to the SNF2/RAD54 helicase family. ISWI subfamily. In terms of assembly, component of the ACF-5 ISWI chromatin-remodeling complex (also called the ACF/WCRF complex) at least composed of SMARCA5/SNF2H and BAZ1A/ACF1, which regulates the spacing of histone octamers on the DNA template to facilitate access to DNA. Within the complex interacts with BAZ1A/ACF1; the interaction is direct and is required to slide nucleosomes from end to center positions on a DNA template in an ATP-dependent manner. Component of the CHRAC ISWI chromatin-remodeling complex at least composed of SMARCA5/SNF2H, BAZ1A/ACF1, CHRAC1 and POLE3; the complex preferentially binds DNA through the CHRAC1-POLE3 heterodimer and possesses ATP-dependent nucleosome-remodeling activity. Within the complex interacts with BAZ1A/ACF1; the interaction is direct and promotes the interaction with the POLE3-CHRAC1 heterodimer. Within the complex interacts with the POLE3-CHRAC1 heterodimer; the interaction is direct and enhances nucleosome sliding activity by the SMARCA5/SNF2H and BAZ1A/ACF1 interaction. Neither POLE3 nor CHRAC1 enhances nucleosome sliding activity of the ACF-5 ISWI chromatin remodeling complex. Component of the WICH-5 ISWI chromatin-remodeling complex (also called the WICH complex) at least composed of SMARCA5/SNF2H and BAZ1B/WSTF, which regulates the spacing of histone octamers on the DNA template to facilitate access to DNA. Within the complex interacts with BAZ1B/WSTF. Component of the NoRC-5 ISWI chromatin-remodeling complex (also called the NoRC chromatin-remodeling complex) at least composed of SMARCA5/SNF2H and BAZ2A/TIP5; the complex suppresses rDNA transcription by a combination of nucleosome remodeling, histone deacetylation, and DNA methylation. Within the complex interacts with BAZ2A/TIP5. Within the complex interacts with HDAC1. Component of the BRF-5 ISWI chromatin-remodeling complex at least composed of SMARCA5/SNF2H and BAZ2B. Within the complex interacts with BAZ2B. Component of the NURF-5 ISWI chromatin-remodeling complex at least composed of SMARCA5/SNF2H and BPTF. Within the complex interacts with BPFT. Component of the CERF-5 ISWI chromatin-remodeling complex at least composed of SMARCA5/SNF2H and CECR2. LUZP1 is detected as part of the CERF-5 complex in embryonic stem cells where it is involved in complex stabilization but is not detected in the complex in the testis. Component of the RSF-5 ISWI chromatin-remodeling complex (also called the RSF complex) at least composed of SMARCA5/SNF2H and RSF1. Within the complex interacts with RSF1. Interacts with the cohesin complex component RAD21; the interaction is direct. Interacts with the NuRD complex components HDAC2, RBBP4 and CHD4; the interactions are direct. Interacts with PCNA. Component of the B-WICH complex, at least composed of SMARCA5/SNF2H, BAZ1B/WSTF, SF3B1, DEK, MYO1C, ERCC6, MYBBP1A and DDX21 which positively regulates RNA polymerase III transcription. Interacts with MYO1C. Interacts with BEND3. Interacts with SIRT6; promoting recruitment to DNA damage sites. As to expression, ubiquitously expressed.

It is found in the nucleus. The protein resides in the chromosome. It carries out the reaction ATP + H2O = ADP + phosphate + H(+). Functionally, ATPase that possesses intrinsic ATP-dependent nucleosome-remodeling activity. Catalytic subunit of ISWI chromatin-remodeling complexes, which form ordered nucleosome arrays on chromatin and facilitate access to DNA during DNA-templated processes such as DNA replication, transcription, and repair; this may require intact histone H4 tails. Within the ISWI chromatin-remodeling complexes, slides edge- and center-positioned histone octamers away from their original location on the DNA template. Catalytic activity and histone octamer sliding propensity is regulated and determined by components of the ISWI chromatin-remodeling complexes. The BAZ1A/ACF1-, BAZ1B/WSTF-, BAZ2A/TIP5- and BAZ2B-containing ISWI chromatin-remodeling complexes regulate the spacing of nucleosomes along the chromatin and have the ability to slide mononucleosomes to the center of a DNA template in an ATP-dependent manner. The CECR2- and RSF1-containing ISWI chromatin-remodeling complexes do not have the ability to slide mononucleosomes to the center of a DNA template. Binds to core histones together with RSF1, and is required for the assembly of regular nucleosome arrays by the RSF-5 ISWI chromatin-remodeling complex. Involved in DNA replication and together with BAZ1A/ACF1 is required for replication of pericentric heterochromatin in S-phase. Probably plays a role in repression of RNA polymerase I dependent transcription of the rDNA locus, through the recruitment of the SIN3/HDAC1 corepressor complex to the rDNA promoter. The WICH-5 ISWI chromatin-remodeling complex regulates the transcription of various genes, has a role in RNA polymerase I and RNA polymerase III transcription, mediates the histone H2AX phosphorylation at 'Tyr-142', and is involved in the maintenance of chromatin structures during DNA replication processes. Essential component of the NoRC-5 ISWI chromatin-remodeling complex, a complex that mediates silencing of a fraction of rDNA by recruiting histone-modifying enzymes and DNA methyltransferases, leading to heterochromatin formation and transcriptional silencing. Required for embryonic development and differentiation, and the proliferation of early blastocyst-derived stem cells. In Mus musculus (Mouse), this protein is SWI/SNF-related matrix-associated actin-dependent regulator of chromatin subfamily A member 5 (Smarca5).